The chain runs to 927 residues: Isoleucine--tRNA ligase (927 aa).

The 'HIGH' region signature appears at 57-67; the sequence is PFANGNIHMGH. Glu553 provides a ligand contact to L-isoleucyl-5'-AMP. A 'KMSKS' region motif is present at residues 594-598; it reads KMSKS. Lys597 is a binding site for ATP. Residues Cys886, Cys889, Cys906, and Cys909 each coordinate Zn(2+).

The protein belongs to the class-I aminoacyl-tRNA synthetase family. IleS type 1 subfamily. As to quaternary structure, monomer. Zn(2+) is required as a cofactor.

Its subcellular location is the cytoplasm. It catalyses the reaction tRNA(Ile) + L-isoleucine + ATP = L-isoleucyl-tRNA(Ile) + AMP + diphosphate. Functionally, catalyzes the attachment of isoleucine to tRNA(Ile). As IleRS can inadvertently accommodate and process structurally similar amino acids such as valine, to avoid such errors it has two additional distinct tRNA(Ile)-dependent editing activities. One activity is designated as 'pretransfer' editing and involves the hydrolysis of activated Val-AMP. The other activity is designated 'posttransfer' editing and involves deacylation of mischarged Val-tRNA(Ile). This chain is Isoleucine--tRNA ligase, found in Lactobacillus acidophilus (strain ATCC 700396 / NCK56 / N2 / NCFM).